The following is a 98-amino-acid chain: Protein S100-A11 (98 aa).

Phosphothreonine is present on T5. EF-hand domains are found at residues 8–44 and 50–85; these read CIESLIAVFQKYSGKDGNNTQLSKTEFLSFMNTELAA and KDPGVLDRMMKKLDLNCDGQLDFQEFLNLIGGLAIA. N6-acetyllysine is present on K22. Residues N26, Q28, E33, D63, N65, D67, Q69, and E74 each contribute to the Ca(2+) site.

It belongs to the S-100 family. Homodimer; disulfide-linked. In terms of processing, phosphorylation at Thr-5 significantly suppresses homodimerization and promotes association with NCL/nucleolin which induces nuclear translocation.

The protein resides in the cytoplasm. The protein localises to the nucleus. Its function is as follows. Facilitates the differentiation and the cornification of keratinocytes. This chain is Protein S100-A11 (S100a11), found in Mus musculus (Mouse).